Consider the following 59-residue polypeptide: MLNIFSLICLNSDLYSSRFFLAKLPEAYAFLNPIVDVMPVIPLFFLLLAFVWQAAVSFR.

The propeptide occupies 1-22 (MLNIFSLICLNSDLYSSRFFLA). Residues 38–58 (MPVIPLFFLLLAFVWQAAVSF) form a helical membrane-spanning segment.

This sequence belongs to the PsbK family. PSII is composed of 1 copy each of membrane proteins PsbA, PsbB, PsbC, PsbD, PsbE, PsbF, PsbH, PsbI, PsbJ, PsbK, PsbL, PsbM, PsbT, PsbX, PsbY, PsbZ, Psb30/Ycf12, at least 3 peripheral proteins of the oxygen-evolving complex and a large number of cofactors. It forms dimeric complexes.

The protein localises to the plastid. It localises to the chloroplast thylakoid membrane. Functionally, one of the components of the core complex of photosystem II (PSII). PSII is a light-driven water:plastoquinone oxidoreductase that uses light energy to abstract electrons from H(2)O, generating O(2) and a proton gradient subsequently used for ATP formation. It consists of a core antenna complex that captures photons, and an electron transfer chain that converts photonic excitation into a charge separation. The chain is Photosystem II reaction center protein K from Oenothera elata subsp. hookeri (Hooker's evening primrose).